The sequence spans 93 residues: Small ribosomal subunit protein uS17 (93 aa).

It belongs to the universal ribosomal protein uS17 family. In terms of assembly, part of the 30S ribosomal subunit.

One of the primary rRNA binding proteins, it binds specifically to the 5'-end of 16S ribosomal RNA. This is Small ribosomal subunit protein uS17 from Bordetella bronchiseptica (strain ATCC BAA-588 / NCTC 13252 / RB50) (Alcaligenes bronchisepticus).